The chain runs to 501 residues: MKLKRKRVKPIALDDVTIIDDGRLRKAITAAALGNAMEWFDFGVYGFVAYALGQVFFPGADPGVQMIAALATFSVPFLIRPLGGVFFGALGDKYGRQKILAITIIIMSISTFCIGLIPSYERIGIWAPILLLLAKMAQGFSVGGEYTGASIFVAEYSPDRKRGFMGSWLDFGSIAGFVLGAGVVVLISTLIGEQAFLAWGWRLPFFLALPLGLIGLYLRHALEETPAFRQHVEKLEQNDRDGLKAGPGVSFREIATHHWKSLLVCIGLVIATNVTYYMLLTYMPSYLSHSLHYSENHGVLIIIAIMIGMLFVQPVMGLLSDRFGRKPFVVIGSVAMFFLAVPSFMLINSDIIGLIFLGLLMLAVILNAFTGVMASTLPALFPTHIRYSALASAFNISVLIAGLTPTVAAWLVESSQNLYMPAYYLMVIAVIGLLTGLFMKETANKPLKGATPAASDLSEAKEILQEHHDNIEHKIEDITQQIAELEAKRQLLVAQHPRIND.

At 1–38 the chain is on the cytoplasmic side; sequence MKLKRKRVKPIALDDVTIIDDGRLRKAITAAALGNAME. A helical transmembrane segment spans residues 39–59; the sequence is WFDFGVYGFVAYALGQVFFPG. At 60–66 the chain is on the periplasmic side; it reads ADPGVQM. A helical membrane pass occupies residues 67–87; it reads IAALATFSVPFLIRPLGGVFF. Residues 88 to 98 lie on the Cytoplasmic side of the membrane; that stretch reads GALGDKYGRQK. The chain crosses the membrane as a helical span at residues 99-119; sequence ILAITIIIMSISTFCIGLIPS. The Periplasmic portion of the chain corresponds to 120 to 122; that stretch reads YER. Residues 123–143 form a helical membrane-spanning segment; it reads IGIWAPILLLLAKMAQGFSVG. Over 144–170 the chain is Cytoplasmic; it reads GEYTGASIFVAEYSPDRKRGFMGSWLD. Residues 171 to 191 traverse the membrane as a helical segment; sequence FGSIAGFVLGAGVVVLISTLI. Topologically, residues 192-195 are periplasmic; the sequence is GEQA. A helical membrane pass occupies residues 196–216; it reads FLAWGWRLPFFLALPLGLIGL. The Cytoplasmic portion of the chain corresponds to 217-261; it reads YLRHALEETPAFRQHVEKLEQNDRDGLKAGPGVSFREIATHHWKS. The helical transmembrane segment at 262-282 threads the bilayer; sequence LLVCIGLVIATNVTYYMLLTY. Residues 283–298 lie on the Periplasmic side of the membrane; sequence MPSYLSHSLHYSENHG. The chain crosses the membrane as a helical span at residues 299–319; the sequence is VLIIIAIMIGMLFVQPVMGLL. Residues 320 to 326 lie on the Cytoplasmic side of the membrane; that stretch reads SDRFGRK. A helical transmembrane segment spans residues 327–347; it reads PFVVIGSVAMFFLAVPSFMLI. Topologically, residues 348 to 350 are periplasmic; the sequence is NSD. The chain crosses the membrane as a helical span at residues 351–371; sequence IIGLIFLGLLMLAVILNAFTG. The Cytoplasmic segment spans residues 372 to 391; the sequence is VMASTLPALFPTHIRYSALA. The chain crosses the membrane as a helical span at residues 392-412; the sequence is SAFNISVLIAGLTPTVAAWLV. Topologically, residues 413–417 are periplasmic; the sequence is ESSQN. Residues 418-438 form a helical membrane-spanning segment; that stretch reads LYMPAYYLMVIAVIGLLTGLF. At 439 to 501 the chain is on the cytoplasmic side; that stretch reads MKETANKPLK…LVAQHPRIND (63 aa). A coiled-coil region spans residues 461–495; sequence KEILQEHHDNIEHKIEDITQQIAELEAKRQLLVAQ.

Belongs to the major facilitator superfamily. Sugar transporter (TC 2.A.1.1) family.

The protein localises to the cell inner membrane. Functionally, involved in uptake and accumulation of various osmoprotectants. Allows the uptake of glycine betaine, proline, ectoine, and pipecolic acid. May be a contributory factor in the infection progression within the host. The polypeptide is Glycine betaine/proline/ectoine/pipecolic acid transporter OusA (Dickeya dadantii (strain 3937) (Erwinia chrysanthemi (strain 3937))).